The primary structure comprises 143 residues: Mediator of RNA polymerase II transcription subunit 9 (143 aa).

A coiled-coil region spans residues 84-141 (QDCNHKIFELQKRFESAREQIRQLPGIDYNKDEQLQRLELLRNQFKLKQQLIRKYKDT).

This sequence belongs to the Mediator complex subunit 9 family. As to quaternary structure, component of the Mediator complex.

It is found in the nucleus. Component of the Mediator complex, a coactivator involved in the regulated transcription of nearly all RNA polymerase II-dependent genes. Mediator functions as a bridge to convey information from gene-specific regulatory proteins to the basal RNA polymerase II transcription machinery. Mediator is recruited to promoters by direct interactions with regulatory proteins and serves as a scaffold for the assembly of a functional preinitiation complex with RNA polymerase II and the general transcription factors. The chain is Mediator of RNA polymerase II transcription subunit 9 (MED9) from Drosophila pseudoobscura pseudoobscura (Fruit fly).